Reading from the N-terminus, the 317-residue chain is Retinol dehydrogenase 7 (317 aa).

F33–L57 lines the NADP(+) pocket. Residue S164 participates in substrate binding. Y176 functions as the Proton acceptor in the catalytic mechanism.

This sequence belongs to the short-chain dehydrogenases/reductases (SDR) family.

It is found in the microsome. The protein resides in the endoplasmic reticulum. The enzyme catalyses all-trans-retinol--[retinol-binding protein] + NAD(+) = all-trans-retinal--[retinol-binding protein] + NADH + H(+). It participates in cofactor metabolism; retinol metabolism. In terms of biological role, acts on retinol bound on cellular retinol-binding protein (CRBP). The polypeptide is Retinol dehydrogenase 7 (Rattus norvegicus (Rat)).